The sequence spans 107 residues: SOSS complex subunit C (107 aa).

Belongs to the SOSS-C family. As to quaternary structure, belongs to the multiprotein complex Integrator. Component of the SOSS complex, composed of soss-b (soss-b1/nabp2 or soss-b2/nabp1), soss-a/ints3 and soss-c/inip.

The protein localises to the nucleus. Component of the SOSS complex, a multiprotein complex that functions downstream of the MRN complex to promote DNA repair and G2/M checkpoint. The SOSS complex associates with single-stranded DNA at DNA lesions and influences diverse endpoints in the cellular DNA damage response including cell-cycle checkpoint activation, recombinational repair and maintenance of genomic stability. Required for efficient homologous recombination-dependent repair of double-strand breaks (DSBs). The polypeptide is SOSS complex subunit C (inip) (Salmo salar (Atlantic salmon)).